A 219-amino-acid chain; its full sequence is 3-dehydroquinate dehydratase (219 aa).

3-dehydroquinate is bound by residues 34-36 (ELR) and R63. H114 (proton donor/acceptor) is an active-site residue. The active-site Schiff-base intermediate with substrate is the K139. 3-dehydroquinate contacts are provided by R174, T193, and Q197.

It belongs to the type-I 3-dehydroquinase family. In terms of assembly, homodimer.

It catalyses the reaction 3-dehydroquinate = 3-dehydroshikimate + H2O. It functions in the pathway metabolic intermediate biosynthesis; chorismate biosynthesis; chorismate from D-erythrose 4-phosphate and phosphoenolpyruvate: step 3/7. Involved in the third step of the chorismate pathway, which leads to the biosynthesis of aromatic amino acids. Catalyzes the cis-dehydration of 3-dehydroquinate (DHQ) and introduces the first double bond of the aromatic ring to yield 3-dehydroshikimate. The chain is 3-dehydroquinate dehydratase from Sulfolobus acidocaldarius (strain ATCC 33909 / DSM 639 / JCM 8929 / NBRC 15157 / NCIMB 11770).